We begin with the raw amino-acid sequence, 455 residues long: MARVPRHRRLVLPLLCLLFQGATALLFAIFVRYNHETDAALWHWGNHSNVDNEFYFRYPSFQDVHVMVFVGFGFLMVFLQRYGFSSVGFTFLVASLTLQWATLLQGFLHSFHGGHIHVGVESLINADFCAGAVLISFGAVLGKTGPAQLLLMALLEAVLFSVNEFILLSLLGVRDAGGSMTIHTFGAYFGLFLSWVLYRSQLEKSRHRQSSVYNSDLFAMIGTIFLWVFWPSFNSAPTALGDGQHRTVVNTYYSLTASTLSTFALSALVSGDGRLDMVHVQNAALAGGVVVGTSSEMMLTPFGALAAGFLAGTVSTLGYKFFTPILESRFKLQDTCGVHNLHGMPGVLGAILGVVVAALATHEAYGDGLQSVFPLIAKGQRSATSQAVYQLFGMFVTLVFASVGGSLGGLLLRLPFLDSPPDSQCFEDQVYWEVPGEQETETQRPLRGGESDTRA.

Over 1-10 the chain is Cytoplasmic; the sequence is MARVPRHRRL. Residues 11-31 form a helical membrane-spanning segment; sequence VLPLLCLLFQGATALLFAIFV. At 32–58 the chain is on the extracellular side; the sequence is RYNHETDAALWHWGNHSNVDNEFYFRY. N-linked (GlcNAc...) asparagine glycosylation occurs at Asn46. Residues 59-79 form a helical membrane-spanning segment; that stretch reads PSFQDVHVMVFVGFGFLMVFL. The Cytoplasmic portion of the chain corresponds to 80-83; the sequence is QRYG. A helical membrane pass occupies residues 84–104; that stretch reads FSSVGFTFLVASLTLQWATLL. The Extracellular segment spans residues 105 to 121; it reads QGFLHSFHGGHIHVGVE. The helical transmembrane segment at 122–142 threads the bilayer; that stretch reads SLINADFCAGAVLISFGAVLG. Residues 143 to 146 are Cytoplasmic-facing; sequence KTGP. A helical membrane pass occupies residues 147-167; it reads AQLLLMALLEAVLFSVNEFIL. Residues 168–175 are Extracellular-facing; it reads LSLLGVRD. Residues 176–198 form a helical membrane-spanning segment; sequence AGGSMTIHTFGAYFGLFLSWVLY. Residues 199-216 are Cytoplasmic-facing; the sequence is RSQLEKSRHRQSSVYNSD. Residues 217-237 form a helical membrane-spanning segment; it reads LFAMIGTIFLWVFWPSFNSAP. The Extracellular portion of the chain corresponds to 238–248; it reads TALGDGQHRTV. Residues 249-269 traverse the membrane as a helical segment; it reads VNTYYSLTASTLSTFALSALV. Topologically, residues 270 to 279 are cytoplasmic; it reads SGDGRLDMVH. A helical membrane pass occupies residues 280–300; sequence VQNAALAGGVVVGTSSEMMLT. A topological domain (extracellular) is located at residue Pro301. A helical transmembrane segment spans residues 302-322; the sequence is FGALAAGFLAGTVSTLGYKFF. At 323 to 343 the chain is on the cytoplasmic side; sequence TPILESRFKLQDTCGVHNLHG. Residues 344–364 form a helical membrane-spanning segment; the sequence is MPGVLGAILGVVVAALATHEA. The Extracellular portion of the chain corresponds to 365–390; sequence YGDGLQSVFPLIAKGQRSATSQAVYQ. The helical transmembrane segment at 391 to 411 threads the bilayer; that stretch reads LFGMFVTLVFASVGGSLGGLL. Residues 412–455 lie on the Cytoplasmic side of the membrane; sequence LRLPFLDSPPDSQCFEDQVYWEVPGEQETETQRPLRGGESDTRA. An interaction with ANK3 region spans residues 413–421; the sequence is RLPFLDSPP. Positions 434 to 455 are disordered; the sequence is VPGEQETETQRPLRGGESDTRA. A compositionally biased stretch (basic and acidic residues) spans 441 to 455; it reads ETQRPLRGGESDTRA.

Belongs to the ammonium transporter (TC 2.A.49) family. Rh subfamily. In terms of assembly, interacts (via C-terminus) with ANK2 and ANK3; required for targeting to the basolateral membrane. N-glycosylated. Expressed in kidney by connecting segments and collecting tubules. Also expressed in liver by perivenous hepatocytes. Expressed in the forestomach and the fundus of the stomach. Expressed in duodenum, jejunum, ileum and colon at the level of villous (at protein level). Specifically expressed in kidney where it is restricted to the epithelial linings of the convoluted tubules and the loop of Henle. Also detected in ovary. Expressed by hepatocytes and dermal hair follicles and papillae.

It is found in the cell membrane. It localises to the basolateral cell membrane. The catalysed reaction is NH4(+)(in) = NH4(+)(out). It carries out the reaction methylamine(out) = methylamine(in). The enzyme catalyses CO2(out) = CO2(in). Its activity is regulated as follows. Inhibited by amiloride. Its function is as follows. Ammonium transporter involved in the maintenance of acid-base homeostasis. Transports ammonium and its related derivative methylammonium across the basolateral plasma membrane of epithelial cells likely contributing to renal transepithelial ammonia transport and ammonia metabolism. May transport either NH4(+) or NH3 ammonia species predominantly mediating an electrogenic NH4(+) transport. May act as a CO2 channel providing for renal acid secretion. The sequence is that of Ammonium transporter Rh type B (Rhbg) from Mus musculus (Mouse).